A 456-amino-acid chain; its full sequence is Phosphomannomutase (456 aa).

Ser98 acts as the Phosphoserine intermediate in catalysis. The Mg(2+) site is built by Ser98, Asp246, Asp248, and Asp250.

Belongs to the phosphohexose mutase family. Mg(2+) serves as cofactor.

The catalysed reaction is alpha-D-mannose 1-phosphate = D-mannose 6-phosphate. The protein operates within nucleotide-sugar biosynthesis; GDP-alpha-D-mannose biosynthesis; alpha-D-mannose 1-phosphate from D-fructose 6-phosphate: step 2/2. It participates in bacterial outer membrane biogenesis; LPS O-antigen biosynthesis. In terms of biological role, involved in GDP-mannose biosynthesis which serves as the activated sugar nucleotide precursor for mannose residues in cell surface polysaccharides. This enzyme participates in synthesis of the LPS O9 antigen. This chain is Phosphomannomutase (manB), found in Escherichia coli.